Consider the following 488-residue polypeptide: Beta-amylase (488 aa).

Substrate-binding residues include D51, H91, and D99. The active-site Proton donor is E184. Substrate contacts are provided by K293, H298, and T340. Residue E378 is the Proton acceptor of the active site. Substrate-binding positions include 379 to 380 (NA) and R418.

The protein belongs to the glycosyl hydrolase 14 family.

The enzyme catalyses Hydrolysis of (1-&gt;4)-alpha-D-glucosidic linkages in polysaccharides so as to remove successive maltose units from the non-reducing ends of the chains.. The polypeptide is Beta-amylase (BMY1) (Zea mays (Maize)).